The sequence spans 1218 residues: Protein dispatched (1218 aa).

The helical transmembrane segment at 21–41 (YLVVVSIAVYCVACIIVALVL) threads the bilayer. Positions 99–135 (VETKLHPNHRRRKNKHKNRNKNKRRKEQNQSSHEHHD) are disordered. A compositionally biased stretch (basic residues) spans 104–124 (HPNHRRRKNKHKNRNKNKRRK). N-linked (GlcNAc...) asparagine glycosylation is found at Asn-127, Asn-176, Asn-197, Asn-264, Asn-319, and Asn-388. The SSD domain occupies 430-624 (AMDLGLENEL…ITWLPASVSI (195 aa)). A run of 6 helical transmembrane segments spans residues 443 to 463 (LLLT…ASVW), 473 to 493 (LMSC…YAIV), 504 to 524 (LLAV…FLKI), 570 to 590 (AAAS…ASYS), 598 to 618 (CFGI…ITWL), and 670 to 690 (AYLW…IVFW). Residues Asn-767, Asn-883, and Asn-891 are each glycosylated (N-linked (GlcNAc...) asparagine). 5 helical membrane passes run 975–995 (LAVL…VLTV), 996–1016 (SLSI…LNIL), 1019–1039 (IAVS…GIHY), 1058–1078 (IIGP…IMMA), and 1087–1107 (IGVF…FFLM).

Belongs to the dispatched family.

It localises to the membrane. Functionally, segment polarity protein which functions in hedgehog (Hh) signaling. Regulates the trafficking and the release of cholesterol-modified hedgehog protein from cells of the posterior compartment (P cells) and is hence required for the effective production of the Hh signal. The protein is Protein dispatched (disp) of Drosophila melanogaster (Fruit fly).